The following is a 284-amino-acid chain: 2-dehydro-3-deoxyphosphooctonate aldolase (284 aa).

It belongs to the KdsA family.

It is found in the cytoplasm. It catalyses the reaction D-arabinose 5-phosphate + phosphoenolpyruvate + H2O = 3-deoxy-alpha-D-manno-2-octulosonate-8-phosphate + phosphate. It functions in the pathway carbohydrate biosynthesis; 3-deoxy-D-manno-octulosonate biosynthesis; 3-deoxy-D-manno-octulosonate from D-ribulose 5-phosphate: step 2/3. It participates in bacterial outer membrane biogenesis; lipopolysaccharide biosynthesis. The sequence is that of 2-dehydro-3-deoxyphosphooctonate aldolase from Histophilus somni (strain 129Pt) (Haemophilus somnus).